A 367-amino-acid chain; its full sequence is E3 ubiquitin-protein ligase RGLG3 (367 aa).

The 221-residue stretch at 37–257 (NLILGIDFTK…KEAAFALAAL (221 aa)) folds into the VWFA domain. An RING-type zinc finger spans residues 323-356 (CPICLTNPKDMAFSCGHTTCKECGVVITTCPLCR).

As to quaternary structure, interacts with UBC30, GRXS17 and GLB3. Binds to and coactivates GAF1/IDD2 and ENY/IDD1. Widely expressed.

The protein resides in the cytoplasm. The protein localises to the nucleus. The catalysed reaction is S-ubiquitinyl-[E2 ubiquitin-conjugating enzyme]-L-cysteine + [acceptor protein]-L-lysine = [E2 ubiquitin-conjugating enzyme]-L-cysteine + N(6)-ubiquitinyl-[acceptor protein]-L-lysine.. In terms of biological role, possesses E3 ubiquitin-protein ligase in vitro. Acts as upstream modulator of jasmonate (JA) signaling in response to various stimuli, such as JA-inhibited root growth, JA-inductive gene expression, coronatine-mediated pathogen susceptibility, wound-stimulated expression of JA-responsive genes and wound-induced JA biosynthesis. Controls fumonisin B1 (FB1)-triggered programmed cell death (PCD) by modulating the JA signaling pathway. May mediate salicylic acid (SA) suppression of JA signaling in FB1-induced responses. May mediate the formation of 'Lys-48'-linked multiubiquitin chains. Mediates the polyubiquitination and subsequent proteasomal degradation of the target protein GRXS17. In Arabidopsis thaliana (Mouse-ear cress), this protein is E3 ubiquitin-protein ligase RGLG3.